The chain runs to 361 residues: Plasmid recombination enzyme (361 aa).

DNA contacts are provided by Tyr-44 and Tyr-114. The tract at residues 331–361 (RAGLKEPSKKAPESSQELDRHKSDELGGPHL) is disordered.

It belongs to the plasmid mobilization pre family.

Functionally, the interaction of the RSA site and the pre protein may not only serve a function in plasmid maintenance, but also contribute to the distribution of small antibiotic resistance plasmids among Gram-positive bacteria. This chain is Plasmid recombination enzyme (preA), found in Lactiplantibacillus plantarum (Lactobacillus plantarum).